Reading from the N-terminus, the 617-residue chain is E3 ubiquitin-protein ligase ORTHRUS 1 (617 aa).

Residues 12-62 form a PHD-type zinc finger; it reads DGVCMRCQVNPPSEETLTCGTCVTPWHVPCLLPESLASSTGEWECPDCSGV. An RING-type 1 zinc finger spans residues 129 to 169; the sequence is CSICIQLPERPITTPCGHNFCLKCFEKWAVGQGKLTCMICR. The YDG domain maps to 258–407; it reads TRKQGVLVGE…FKVCRYLFVR (150 aa). The segment at 495–552 adopts an RING-type 2 zinc-finger fold; sequence CQICREVLSLPVTTPCAHNFCKACLEAKFAGITQLRERSNGGRKLRAKKNIMTCPCCT. Residues 563 to 593 are a coiled coil; sequence QVNREMMEIIENFKKSEEEADASISEEEEEE. The disordered stretch occupies residues 575 to 617; that stretch reads FKKSEEEADASISEEEEEESEPPTKKIKMDNNSVGGSGTSLSA. The span at 580 to 595 shows a compositional bias: acidic residues; sequence EEADASISEEEEEESE. Residues 604–617 show a composition bias toward polar residues; the sequence is DNNSVGGSGTSLSA.

Expressed in inflorescences and leaves.

It is found in the nucleus. It catalyses the reaction S-ubiquitinyl-[E2 ubiquitin-conjugating enzyme]-L-cysteine + [acceptor protein]-L-lysine = [E2 ubiquitin-conjugating enzyme]-L-cysteine + N(6)-ubiquitinyl-[acceptor protein]-L-lysine.. The protein operates within protein modification; protein ubiquitination. Its function is as follows. E3 ubiquitin-protein ligase. Participates in CpG methylation-dependent transcriptional regulation and epigenetic transcriptional silencing. Mediates ubiquitination with the E2 ubiquitin-conjugating enzymes UBC11, UBC8 and UBC8 homologs (e.g. UBC10, UBC11, UBC28 and UBC29) but not with UBC27, UBC30, UBC32, UBC34 and UBC36. Promotes methylation-mediated gene silencing leading, for example, to early flowering. Can bind to CpG, CpNpG, and CpNpN DNA motifs, with a strong preference for methylated forms, and with highest affinity for CpG substrate. This Arabidopsis thaliana (Mouse-ear cress) protein is E3 ubiquitin-protein ligase ORTHRUS 1 (ORTH1).